Here is a 287-residue protein sequence, read N- to C-terminus: Acetyl-coenzyme A carboxylase carboxyl transferase subunit beta (287 aa).

The CoA carboxyltransferase N-terminal domain maps to 36 to 287 (MWVKCDRCGK…KVLYKILELH (252 aa)). C40, C43, C59, and C62 together coordinate Zn(2+). Residues 40 to 62 (CDRCGKTLYKKDLDENLKVCKFC) form a C4-type zinc finger.

Belongs to the AccD/PCCB family. In terms of assembly, acetyl-CoA carboxylase is a heterohexamer composed of biotin carboxyl carrier protein (AccB), biotin carboxylase (AccC) and two subunits each of ACCase subunit alpha (AccA) and ACCase subunit beta (AccD). It depends on Zn(2+) as a cofactor.

The protein localises to the cytoplasm. The enzyme catalyses N(6)-carboxybiotinyl-L-lysyl-[protein] + acetyl-CoA = N(6)-biotinyl-L-lysyl-[protein] + malonyl-CoA. The protein operates within lipid metabolism; malonyl-CoA biosynthesis; malonyl-CoA from acetyl-CoA: step 1/1. Its function is as follows. Component of the acetyl coenzyme A carboxylase (ACC) complex. Biotin carboxylase (BC) catalyzes the carboxylation of biotin on its carrier protein (BCCP) and then the CO(2) group is transferred by the transcarboxylase to acetyl-CoA to form malonyl-CoA. This chain is Acetyl-coenzyme A carboxylase carboxyl transferase subunit beta, found in Clostridium novyi (strain NT).